We begin with the raw amino-acid sequence, 85 residues long: ATP synthase subunit c (85 aa).

2 helical membrane-spanning segments follow: residues 10–30 (IAVA…FAVL) and 53–73 (FIIA…ALLF).

This sequence belongs to the ATPase C chain family. In terms of assembly, F-type ATPases have 2 components, F(1) - the catalytic core - and F(0) - the membrane proton channel. F(1) has five subunits: alpha(3), beta(3), gamma(1), delta(1), epsilon(1). F(0) has three main subunits: a(1), b(2) and c(10-14). The alpha and beta chains form an alternating ring which encloses part of the gamma chain. F(1) is attached to F(0) by a central stalk formed by the gamma and epsilon chains, while a peripheral stalk is formed by the delta and b chains.

It localises to the cell inner membrane. Its function is as follows. F(1)F(0) ATP synthase produces ATP from ADP in the presence of a proton or sodium gradient. F-type ATPases consist of two structural domains, F(1) containing the extramembraneous catalytic core and F(0) containing the membrane proton channel, linked together by a central stalk and a peripheral stalk. During catalysis, ATP synthesis in the catalytic domain of F(1) is coupled via a rotary mechanism of the central stalk subunits to proton translocation. Functionally, key component of the F(0) channel; it plays a direct role in translocation across the membrane. A homomeric c-ring of between 10-14 subunits forms the central stalk rotor element with the F(1) delta and epsilon subunits. In Vibrio cholerae serotype O1 (strain ATCC 39315 / El Tor Inaba N16961), this protein is ATP synthase subunit c.